A 223-amino-acid polypeptide reads, in one-letter code: UPF0758 protein Tgr7_0100 (223 aa).

An MPN domain is found at 102 to 223 (ALTSPDDTRR…LVSFAERGLL (122 aa)). H173, H175, and D186 together coordinate Zn(2+). Positions 173–186 (HNHPSGVAEPSRSD) match the JAMM motif motif.

This sequence belongs to the UPF0758 family.

In Thioalkalivibrio sulfidiphilus (strain HL-EbGR7), this protein is UPF0758 protein Tgr7_0100.